Consider the following 267-residue polypeptide: 4-hydroxy-tetrahydrodipicolinate reductase (267 aa).

Residues 9-14 (GAAGRM) and Asp-35 each bind NAD(+). Position 36 (Arg-36) interacts with NADP(+). Residues 99-101 (GTT) and 123-126 (APNY) each bind NAD(+). His-156 acts as the Proton donor/acceptor in catalysis. A (S)-2,3,4,5-tetrahydrodipicolinate-binding site is contributed by His-157. Lys-160 serves as the catalytic Proton donor. 166 to 167 (GT) is a binding site for (S)-2,3,4,5-tetrahydrodipicolinate.

The protein belongs to the DapB family.

It localises to the cytoplasm. It carries out the reaction (S)-2,3,4,5-tetrahydrodipicolinate + NAD(+) + H2O = (2S,4S)-4-hydroxy-2,3,4,5-tetrahydrodipicolinate + NADH + H(+). The enzyme catalyses (S)-2,3,4,5-tetrahydrodipicolinate + NADP(+) + H2O = (2S,4S)-4-hydroxy-2,3,4,5-tetrahydrodipicolinate + NADPH + H(+). It functions in the pathway amino-acid biosynthesis; L-lysine biosynthesis via DAP pathway; (S)-tetrahydrodipicolinate from L-aspartate: step 4/4. Its function is as follows. Catalyzes the conversion of 4-hydroxy-tetrahydrodipicolinate (HTPA) to tetrahydrodipicolinate. This Alkalilimnicola ehrlichii (strain ATCC BAA-1101 / DSM 17681 / MLHE-1) protein is 4-hydroxy-tetrahydrodipicolinate reductase.